We begin with the raw amino-acid sequence, 343 residues long: Glucokinase (343 aa).

21–26 is an ATP binding site; the sequence is ADVGGT.

This sequence belongs to the bacterial glucokinase family.

It is found in the cytoplasm. The catalysed reaction is D-glucose + ATP = D-glucose 6-phosphate + ADP + H(+). This is Glucokinase from Cupriavidus pinatubonensis (strain JMP 134 / LMG 1197) (Cupriavidus necator (strain JMP 134)).